Here is a 153-residue protein sequence, read N- to C-terminus: Transcription antitermination protein NusB (153 aa).

The protein belongs to the NusB family.

Its function is as follows. Involved in transcription antitermination. Required for transcription of ribosomal RNA (rRNA) genes. Binds specifically to the boxA antiterminator sequence of the ribosomal RNA (rrn) operons. This chain is Transcription antitermination protein NusB, found in Clostridium tetani (strain Massachusetts / E88).